The sequence spans 521 residues: U4/U6 small nuclear ribonucleoprotein Prp4 (521 aa).

Lys-26 carries the N6-acetyllysine modification. WD repeat units lie at residues 228-267 (GDDR…LLHT), 270-317 (GHNT…PVAD), 320-359 (GHTV…EILH), 362-401 (GHSM…CIMF), 404-443 (GHLK…CVYT), 446-486 (AHQN…PLKT), and 489-521 (GHEG…WMAE).

As to quaternary structure, component of the precatalytic spliceosome (spliceosome B complex). Component of the U4/U6-U5 tri-snRNP complex, a building block of the precatalytic spliceosome (spliceosome B complex). The U4/U6-U5 tri-snRNP complex is composed of the U4, U6 and U5 snRNAs and at least PRPF3, PRPF4, PRPF6, PRPF8, PRPF31, SNRNP200, TXNL4A, SNRNP40, SNRPB, SNRPD1, SNRPD2, SNRPD3, SNRPE, SNRPF, SNRPG, DDX23, CD2BP2, PPIH, SNU13, EFTUD2, SART1 and USP39, plus LSM2, LSM3, LSM4, LSM5, LSM6, LSM7 and LSM8. Interacts directly with PRPF18, PPIH and PRPF3. Part of a heteromeric complex containing PPIH, PRPF3 and PRPF4 that is stable in the absence of RNA. Interacts with ERCC6.

Its subcellular location is the nucleus. The protein localises to the nucleus speckle. Plays a role in pre-mRNA splicing as component of the U4/U6-U5 tri-snRNP complex that is involved in spliceosome assembly, and as component of the precatalytic spliceosome (spliceosome B complex). The protein is U4/U6 small nuclear ribonucleoprotein Prp4 (Prpf4) of Mus musculus (Mouse).